The sequence spans 449 residues: Phosphoglucosamine mutase (449 aa).

Ser-104 functions as the Phosphoserine intermediate in the catalytic mechanism. Mg(2+) is bound by residues Ser-104, Asp-243, Asp-245, and Asp-247. Phosphoserine is present on Ser-104.

Belongs to the phosphohexose mutase family. The cofactor is Mg(2+). Post-translationally, activated by phosphorylation.

It catalyses the reaction alpha-D-glucosamine 1-phosphate = D-glucosamine 6-phosphate. Its function is as follows. Catalyzes the conversion of glucosamine-6-phosphate to glucosamine-1-phosphate. The chain is Phosphoglucosamine mutase from Xanthomonas axonopodis pv. citri (strain 306).